Here is a 346-residue protein sequence, read N- to C-terminus: KH domain-containing, RNA-binding, signal transduction-associated protein 2 (346 aa).

A KH domain is found at 65–131 (LIPVQQYPKF…AKYAHLSNDL (67 aa)). A disordered region spans residues 175–291 (LSYLNGSDDP…SYESYDDNYS (117 aa)). Over residues 195 to 224 (LRLTSTASPRGRGSAAPPAPPGRGAAAPRG) the composition is skewed to low complexity. Residues 268-287 (YGYDDGYDGEYDDQSYESYD) show a composition bias toward acidic residues.

Belongs to the KHDRBS family.

The protein localises to the nucleus. Its function is as follows. RNA-binding protein that plays a role in the regulation of alternative splicing. This is KH domain-containing, RNA-binding, signal transduction-associated protein 2 (khdrbs2) from Danio rerio (Zebrafish).